Reading from the N-terminus, the 219-residue chain is NAD(P)H-quinone oxidoreductase subunit I (219 aa).

2 4Fe-4S ferredoxin-type domains span residues Gly55 to Val84 and Arg95 to Glu124. Residues Cys64, Cys67, Cys70, Cys74, Cys104, Cys107, Cys110, and Cys114 each coordinate [4Fe-4S] cluster. Positions Leu192–Gly219 are disordered. Low complexity predominate over residues Ser208–Gly219.

Belongs to the complex I 23 kDa subunit family. NDH-1 is composed of at least 11 different subunits. It depends on [4Fe-4S] cluster as a cofactor.

Its subcellular location is the cellular thylakoid membrane. It catalyses the reaction a plastoquinone + NADH + (n+1) H(+)(in) = a plastoquinol + NAD(+) + n H(+)(out). It carries out the reaction a plastoquinone + NADPH + (n+1) H(+)(in) = a plastoquinol + NADP(+) + n H(+)(out). In terms of biological role, NDH-1 shuttles electrons from an unknown electron donor, via FMN and iron-sulfur (Fe-S) centers, to quinones in the respiratory and/or the photosynthetic chain. The immediate electron acceptor for the enzyme in this species is believed to be plastoquinone. Couples the redox reaction to proton translocation, and thus conserves the redox energy in a proton gradient. The protein is NAD(P)H-quinone oxidoreductase subunit I of Synechococcus sp. (strain CC9311).